The sequence spans 118 residues: cAMP-responsive element-binding protein-like 2 (118 aa).

Residues 1–25 (MDDSKVSGGKVKKPGKRGRKPAKID) form a disordered region. Basic residues predominate over residues 10–21 (KVKKPGKRGRKP). The 64-residue stretch at 23-86 (KIDLKAKLER…AAMDQGKIPS (64 aa)) folds into the bZIP domain. Residues 29–60 (KLERSRQSARECRARKKLRYQYLEELVSSRER) are basic motif. A leucine-zipper region spans residues 62 to 69 (ICALREEL).

This sequence belongs to the bZIP family. ATF subfamily.

It is found in the nucleus. Probable regulator of creb1 transcriptional activity which is involved in adipose cells differentiation. May also play a regulatory role in the cell cycle. The sequence is that of cAMP-responsive element-binding protein-like 2 (crebl2) from Xenopus tropicalis (Western clawed frog).